The following is a 102-amino-acid chain: 10 kDa heat shock protein, mitochondrial (102 aa).

Ala-2 is modified (N-acetylalanine). Lys-8 carries the post-translational modification N6-acetyllysine. At Lys-28 the chain carries N6-succinyllysine. Residue Lys-40 is modified to N6-acetyllysine; alternate. Lys-40, Lys-54, and Lys-56 each carry N6-malonyllysine; alternate. N6-succinyllysine; alternate occurs at positions 40, 54, and 56. Residue Lys-56 is modified to N6-acetyllysine; alternate. At Ser-57 the chain carries Phosphoserine. Residues Lys-66 and Lys-70 each carry the N6-acetyllysine; alternate modification. N6-succinyllysine; alternate is present on residues Lys-66 and Lys-70. Thr-79 is subject to Phosphothreonine. Residues Lys-80 and Lys-86 each carry the N6-acetyllysine; alternate modification. Residues Lys-80 and Lys-86 each carry the N6-succinyllysine; alternate modification. At Lys-99 the chain carries N6-acetyllysine.

Belongs to the GroES chaperonin family. Homoheptamer arranged in a ring structure. 2 heptameric Hsp10 rings interact with a Hsp60 tetradecamer in the structure of a back-to-back double heptameric ring to form the symmetrical football complex.

It is found in the mitochondrion matrix. Its function is as follows. Co-chaperonin implicated in mitochondrial protein import and macromolecular assembly. Together with Hsp60, facilitates the correct folding of imported proteins. May also prevent misfolding and promote the refolding and proper assembly of unfolded polypeptides generated under stress conditions in the mitochondrial matrix. The functional units of these chaperonins consist of heptameric rings of the large subunit Hsp60, which function as a back-to-back double ring. In a cyclic reaction, Hsp60 ring complexes bind one unfolded substrate protein per ring, followed by the binding of ATP and association with 2 heptameric rings of the co-chaperonin Hsp10. This leads to sequestration of the substrate protein in the inner cavity of Hsp60 where, for a certain period of time, it can fold undisturbed by other cell components. Synchronous hydrolysis of ATP in all Hsp60 subunits results in the dissociation of the chaperonin rings and the release of ADP and the folded substrate protein. In Mus musculus (Mouse), this protein is 10 kDa heat shock protein, mitochondrial (Hspe1).